Here is a 441-residue protein sequence, read N- to C-terminus: 3-phosphoshikimate 1-carboxyvinyltransferase (441 aa).

Residues 1–21 are disordered; sequence MSANGPSHPARELKAGGSLSG. Lys29, Ser30, and Arg34 together coordinate 3-phosphoshikimate. Lys29 contributes to the phosphoenolpyruvate binding site. Residues Gly103 and Arg132 each contribute to the phosphoenolpyruvate site. Residues Ser177, Gln179, Asp328, and Lys355 each coordinate 3-phosphoshikimate. Gln179 contributes to the phosphoenolpyruvate binding site. Asp328 functions as the Proton acceptor in the catalytic mechanism. 2 residues coordinate phosphoenolpyruvate: Arg359 and Arg401.

It belongs to the EPSP synthase family. In terms of assembly, monomer.

The protein localises to the cytoplasm. It catalyses the reaction 3-phosphoshikimate + phosphoenolpyruvate = 5-O-(1-carboxyvinyl)-3-phosphoshikimate + phosphate. The protein operates within metabolic intermediate biosynthesis; chorismate biosynthesis; chorismate from D-erythrose 4-phosphate and phosphoenolpyruvate: step 6/7. Functionally, catalyzes the transfer of the enolpyruvyl moiety of phosphoenolpyruvate (PEP) to the 5-hydroxyl of shikimate-3-phosphate (S3P) to produce enolpyruvyl shikimate-3-phosphate and inorganic phosphate. In Parasynechococcus marenigrum (strain WH8102), this protein is 3-phosphoshikimate 1-carboxyvinyltransferase.